A 73-amino-acid chain; its full sequence is MKIQVKVKPNAKHQKIEEAEDGSLIISLKSPPVEGKANQELIKLLAQKYRVTKSQISIQSGLSSRNKLIEILD.

Belongs to the UPF0235 family.

The protein is UPF0235 protein PCC7424_0673 of Gloeothece citriformis (strain PCC 7424) (Cyanothece sp. (strain PCC 7424)).